The sequence spans 112 residues: DNA-binding protein TK1278 (112 aa).

This sequence belongs to the PDCD5 family.

The chain is DNA-binding protein TK1278 from Thermococcus kodakarensis (strain ATCC BAA-918 / JCM 12380 / KOD1) (Pyrococcus kodakaraensis (strain KOD1)).